We begin with the raw amino-acid sequence, 198 residues long: Dephospho-CoA kinase (198 aa).

The DPCK domain occupies 4-198; the sequence is IIGITGGIAS…DSQLRRLQNE (195 aa). 12–17 contacts ATP; the sequence is ASGKST.

It belongs to the CoaE family.

The protein localises to the cytoplasm. The enzyme catalyses 3'-dephospho-CoA + ATP = ADP + CoA + H(+). The protein operates within cofactor biosynthesis; coenzyme A biosynthesis; CoA from (R)-pantothenate: step 5/5. Functionally, catalyzes the phosphorylation of the 3'-hydroxyl group of dephosphocoenzyme A to form coenzyme A. The protein is Dephospho-CoA kinase of Streptococcus mutans serotype c (strain ATCC 700610 / UA159).